The primary structure comprises 296 residues: Homoserine kinase (296 aa).

An ATP-binding site is contributed by 84-94 (PLARGLGSSSS).

Belongs to the GHMP kinase family. Homoserine kinase subfamily.

The protein resides in the cytoplasm. It carries out the reaction L-homoserine + ATP = O-phospho-L-homoserine + ADP + H(+). The protein operates within amino-acid biosynthesis; L-threonine biosynthesis; L-threonine from L-aspartate: step 4/5. In terms of biological role, catalyzes the ATP-dependent phosphorylation of L-homoserine to L-homoserine phosphate. This is Homoserine kinase (thrB) from Lactococcus lactis subsp. cremoris (Streptococcus cremoris).